We begin with the raw amino-acid sequence, 252 residues long: Imidazole glycerol phosphate synthase subunit HisF (252 aa).

Catalysis depends on residues Asp11 and Asp130.

Belongs to the HisA/HisF family. As to quaternary structure, heterodimer of HisH and HisF.

The protein resides in the cytoplasm. It carries out the reaction 5-[(5-phospho-1-deoxy-D-ribulos-1-ylimino)methylamino]-1-(5-phospho-beta-D-ribosyl)imidazole-4-carboxamide + L-glutamine = D-erythro-1-(imidazol-4-yl)glycerol 3-phosphate + 5-amino-1-(5-phospho-beta-D-ribosyl)imidazole-4-carboxamide + L-glutamate + H(+). The protein operates within amino-acid biosynthesis; L-histidine biosynthesis; L-histidine from 5-phospho-alpha-D-ribose 1-diphosphate: step 5/9. Functionally, IGPS catalyzes the conversion of PRFAR and glutamine to IGP, AICAR and glutamate. The HisF subunit catalyzes the cyclization activity that produces IGP and AICAR from PRFAR using the ammonia provided by the HisH subunit. This chain is Imidazole glycerol phosphate synthase subunit HisF, found in Staphylococcus epidermidis (strain ATCC 35984 / DSM 28319 / BCRC 17069 / CCUG 31568 / BM 3577 / RP62A).